Consider the following 377-residue polypeptide: Alanine racemase, catabolic (377 aa).

Lysine 51 (proton acceptor; specific for D-alanine) is an active-site residue. Position 51 is an N6-(pyridoxal phosphate)lysine (lysine 51). Residue arginine 150 coordinates substrate. The active-site Proton acceptor; specific for L-alanine is the tyrosine 272. Position 320 (methionine 320) interacts with substrate.

This sequence belongs to the alanine racemase family. It depends on pyridoxal 5'-phosphate as a cofactor.

The enzyme catalyses L-alanine = D-alanine. Functionally, isomerizes L-alanine to D-alanine which is then oxidized to pyruvate by DadA. This is Alanine racemase, catabolic (dadX) from Rhizobium johnstonii (strain DSM 114642 / LMG 32736 / 3841) (Rhizobium leguminosarum bv. viciae).